The sequence spans 86 residues: Cell division protein ZapA (86 aa).

It belongs to the ZapA family. Type 2 subfamily. In terms of assembly, homodimer. Interacts with FtsZ.

The protein resides in the cytoplasm. Functionally, activator of cell division through the inhibition of FtsZ GTPase activity, therefore promoting FtsZ assembly into bundles of protofilaments necessary for the formation of the division Z ring. It is recruited early at mid-cell but it is not essential for cell division. In Oceanobacillus iheyensis (strain DSM 14371 / CIP 107618 / JCM 11309 / KCTC 3954 / HTE831), this protein is Cell division protein ZapA.